We begin with the raw amino-acid sequence, 420 residues long: Glutamyl-tRNA reductase (420 aa).

Substrate contacts are provided by residues 49 to 52 (TCNR), serine 107, 112 to 114 (EPQ), and glutamine 118. The active-site Nucleophile is cysteine 50. 187–192 (GAGETI) contacts NADP(+).

The protein belongs to the glutamyl-tRNA reductase family. Homodimer.

It catalyses the reaction (S)-4-amino-5-oxopentanoate + tRNA(Glu) + NADP(+) = L-glutamyl-tRNA(Glu) + NADPH + H(+). The protein operates within porphyrin-containing compound metabolism; protoporphyrin-IX biosynthesis; 5-aminolevulinate from L-glutamyl-tRNA(Glu): step 1/2. Its function is as follows. Catalyzes the NADPH-dependent reduction of glutamyl-tRNA(Glu) to glutamate 1-semialdehyde (GSA). This chain is Glutamyl-tRNA reductase, found in Nitrosococcus oceani (strain ATCC 19707 / BCRC 17464 / JCM 30415 / NCIMB 11848 / C-107).